Reading from the N-terminus, the 89-residue chain is Large ribosomal subunit protein eL34 (89 aa).

This sequence belongs to the eukaryotic ribosomal protein eL34 family.

This is Large ribosomal subunit protein eL34 from Methanococcus vannielii (strain ATCC 35089 / DSM 1224 / JCM 13029 / OCM 148 / SB).